Reading from the N-terminus, the 207-residue chain is Ribosomal RNA small subunit methyltransferase G (207 aa).

S-adenosyl-L-methionine-binding positions include Gly-74, Leu-79, 125 to 126, and Arg-140; that span reads VE.

The protein belongs to the methyltransferase superfamily. RNA methyltransferase RsmG family.

The protein resides in the cytoplasm. The catalysed reaction is guanosine(527) in 16S rRNA + S-adenosyl-L-methionine = N(7)-methylguanosine(527) in 16S rRNA + S-adenosyl-L-homocysteine. Specifically methylates the N7 position of guanine in position 527 of 16S rRNA. In Shewanella halifaxensis (strain HAW-EB4), this protein is Ribosomal RNA small subunit methyltransferase G.